A 312-amino-acid polypeptide reads, in one-letter code: Taste receptor type 2 member 9 (312 aa).

The Extracellular portion of the chain corresponds to 1 to 9 (MPSAIEAIY). The chain crosses the membrane as a helical span at residues 10 to 32 (IILIAGELTIGIWGNGFIVLVNC). The Cytoplasmic portion of the chain corresponds to 33 to 52 (XDWLKRRDISLIDIILISLA). Residues 53–72 (ISRICLLCVISLDGFFMLLF) traverse the membrane as a helical segment. Residues 73–86 (PGTYGNSVLVSIVN) are Extracellular-facing. The helical transmembrane segment at 87-109 (VVWTFANNSSLWFTSCLSIFYLL) threads the bilayer. The Cytoplasmic portion of the chain corresponds to 110–128 (KIANISHPFFFWLKLKINK). Residues 129-146 (VMLAILLGSFLISLIISV) form a helical membrane-spanning segment. Over 147-180 (XKNDDMWYHLFKVSXEENITWEFKVSKIPGTFKQ) the chain is Extracellular. An N-linked (GlcNAc...) asparagine glycan is attached at asparagine 164. A helical membrane pass occupies residues 181-203 (LTLNLGGRVPFILCLISFFLLLF). The Cytoplasmic segment spans residues 204–234 (SLVRHTKQIQLHATGFRDPSTEAHMRAIKAV). A helical membrane pass occupies residues 235–257 (IIFLLLLIVYYPVFLVMTSSALI). The Extracellular portion of the chain corresponds to 258–261 (PQGK). A helical membrane pass occupies residues 262–284 (LVLMIGDIVTVIFPSSHSFILIM). Over 285-312 (GNSKLREAFLKMLRFVKGFLRRRKPFVP) the chain is Cytoplasmic.

Belongs to the G-protein coupled receptor T2R family.

Its subcellular location is the membrane. In terms of biological role, gustducin-coupled receptor implicated in the perception of bitter compounds in the oral cavity and the gastrointestinal tract. Signals through PLCB2 and the calcium-regulated cation channel TRPM5. The chain is Taste receptor type 2 member 9 (TAS2R9) from Pan troglodytes (Chimpanzee).